A 450-amino-acid polypeptide reads, in one-letter code: Interferon-related developmental regulator 1 (450 aa).

A compositionally biased stretch (basic residues) spans 1–10; the sequence is MPKNKKRNTP. The interval 1–46 is disordered; it reads MPKNKKRNTPHRGGSGGGGSGAAATTAATAGGQHRNVQPFSDEDAS. Residues 22 to 32 are compositionally biased toward low complexity; it reads AAATTAATAGG.

The protein belongs to the IFRD family. In terms of assembly, interacts with PSIP1/LEDGF.

In terms of biological role, could play a role in regulating gene activity in the proliferative and/or differentiative pathways induced by NGF. May be an autocrine factor that attenuates or amplifies the initial ligand-induced signal. This Sus scrofa (Pig) protein is Interferon-related developmental regulator 1 (IFRD1).